The primary structure comprises 404 residues: uncharacterized protein (404 aa).

Transmembrane regions (helical) follow at residues 16 to 36, 49 to 69, 79 to 99, 110 to 130, 133 to 153, 166 to 186, 221 to 241, 252 to 272, 283 to 303, 307 to 327, 342 to 362, and 364 to 384; these read FAFF…QPLM, AASL…LVFG, PIMG…AFSP, IQGV…GEEI, GSLG…AVFG, WHMA…IFFI, FLIG…IVYV, AFSS…SFIG, ILVM…NNML, ILGI…ASSW, LYLF…GLFW, and GFHW…ALWL.

It belongs to the major facilitator superfamily.

It is found in the cell membrane. This is an uncharacterized protein from Bacillus subtilis (strain 168).